The primary structure comprises 124 residues: Small ribosomal subunit protein uS13 (124 aa).

Residues 94 to 117 are compositionally biased toward basic residues; sequence NLPVRGQRTRTNARTRKGPRKTVA. Residues 94 to 124 are disordered; the sequence is NLPVRGQRTRTNARTRKGPRKTVANKKIESK.

This sequence belongs to the universal ribosomal protein uS13 family. Part of the 30S ribosomal subunit. Forms a loose heterodimer with protein S19. Forms two bridges to the 50S subunit in the 70S ribosome.

Located at the top of the head of the 30S subunit, it contacts several helices of the 16S rRNA. In the 70S ribosome it contacts the 23S rRNA (bridge B1a) and protein L5 of the 50S subunit (bridge B1b), connecting the 2 subunits; these bridges are implicated in subunit movement. Contacts the tRNAs in the A and P-sites. The chain is Small ribosomal subunit protein uS13 from Mycoplasma pneumoniae (strain ATCC 29342 / M129 / Subtype 1) (Mycoplasmoides pneumoniae).